A 582-amino-acid polypeptide reads, in one-letter code: MQSDIEICRNTPLSSIATVAANAGLLPHELDTHGKHKAKVHPQCLERLTDNQDGKLVLVTAITPTPLGEGKTVTTIGLSQGLSKINQSVMACIRQPSMGPVFGVKGGAAGGGYSQVAPMDELNLHLTGDIHAVTAAHNLASAALDARLYHEQREGYDAFEARTSLRALKIDVERITWKRVMDHNDRALRMVKIGLNEEGKNINGFEREEGFDISAASELMAILALANDLKDLRQRIGRIVVAYDLNGNPVTTEDLQVAGAMAVTLKETIAPTLMQTLEGVPTLIHAGPFANIAHGNSSIIADQIALKLSSYVVTEAGFGSDMGFEKACNIKALAADRAPDCVVIVATLRGLKANSGHYDLRPGMAIPDSIFNPDQAALEAGFENLKWHINNVHKYGIPAVVAINQFPQDSGQELAELKALIERFNPEVKVAVSTVFAQGGEGAIELAQHVVETCEQGAQFRPLYTKKQSLKEKLMAVCEVGYGASNIEMSELAKQQLAHFEKLGFDDLAVCIAKTPLSITTDSAIKGAPSGFAVPIRELRLCAGAGFVYALSGNVMTMPGLPDKPTFMNLDLDDQGNIIGLS.

Position 65-72 (65-72 (TPLGEGKT)) interacts with ATP.

The protein belongs to the formate--tetrahydrofolate ligase family.

The enzyme catalyses (6S)-5,6,7,8-tetrahydrofolate + formate + ATP = (6R)-10-formyltetrahydrofolate + ADP + phosphate. It functions in the pathway one-carbon metabolism; tetrahydrofolate interconversion. In Vibrio campbellii (strain ATCC BAA-1116), this protein is Formate--tetrahydrofolate ligase.